An 88-amino-acid chain; its full sequence is MGLTLKEHAEVCMALAESSASAGLCYMMSNVAVNCLNLFGSYQLKQKIFSDIVQNKTFAALAYSELGTGTHFYSSFYINMAWNLVKIM.

Positions 1–22 are cleaved as a signal peptide; sequence MGLTLKEHAEVCMALAESSASA.

This is an uncharacterized protein from Haemophilus influenzae (strain ATCC 51907 / DSM 11121 / KW20 / Rd).